A 184-amino-acid chain; its full sequence is RNA polymerase sigma factor HrpL (184 aa).

The short motif at D49–E62 is the Polymerase core binding element. A DNA-binding region (H-T-H motif) is located at residues Y151–S170.

This sequence belongs to the sigma-70 factor family. ECF subfamily.

Sigma factors are initiation factors that promote the attachment of RNA polymerase to specific initiation sites and are then released. This sigma factor is involved in the activation of hprD as well as other hrp loci which are involved in plant pathogenicity, hrmA and avr genes. This Pseudomonas syringae pv. syringae protein is RNA polymerase sigma factor HrpL (hrpL).